The chain runs to 311 residues: Phosphopantothenate--cysteine ligase (311 aa).

Ala-2 is modified (N-acetylalanine).

Belongs to the PPC synthetase family. Homodimer.

It catalyses the reaction (R)-4'-phosphopantothenate + L-cysteine + ATP = N-[(R)-4-phosphopantothenoyl]-L-cysteine + AMP + diphosphate + H(+). It carries out the reaction (R)-4'-phosphopantothenate + L-cysteine + CTP = N-[(R)-4-phosphopantothenoyl]-L-cysteine + CMP + diphosphate + H(+). It participates in cofactor biosynthesis; coenzyme A biosynthesis; CoA from (R)-pantothenate: step 2/5. Its function is as follows. Catalyzes the second step in the biosynthesis of coenzyme A from vitamin B5, where cysteine is conjugated to 4'-phosphopantothenate to form 4-phosphopantothenoylcysteine. Has a preference for ATP over CTP as a cosubstrate. This Mus musculus (Mouse) protein is Phosphopantothenate--cysteine ligase (Ppcs).